Consider the following 237-residue polypeptide: Pyridoxine 5'-phosphate synthase (237 aa).

3-amino-2-oxopropyl phosphate is bound by residues N7 and R18. H43 acts as the Proton acceptor in catalysis. Positions 45 and 50 each coordinate 1-deoxy-D-xylulose 5-phosphate. E70 acts as the Proton acceptor in catalysis. Residue T100 participates in 1-deoxy-D-xylulose 5-phosphate binding. H190 (proton donor) is an active-site residue. 3-amino-2-oxopropyl phosphate-binding positions include D191 and G213–H214.

This sequence belongs to the PNP synthase family. As to quaternary structure, homooctamer; tetramer of dimers.

The protein resides in the cytoplasm. It catalyses the reaction 3-amino-2-oxopropyl phosphate + 1-deoxy-D-xylulose 5-phosphate = pyridoxine 5'-phosphate + phosphate + 2 H2O + H(+). It participates in cofactor biosynthesis; pyridoxine 5'-phosphate biosynthesis; pyridoxine 5'-phosphate from D-erythrose 4-phosphate: step 5/5. Its function is as follows. Catalyzes the complicated ring closure reaction between the two acyclic compounds 1-deoxy-D-xylulose-5-phosphate (DXP) and 3-amino-2-oxopropyl phosphate (1-amino-acetone-3-phosphate or AAP) to form pyridoxine 5'-phosphate (PNP) and inorganic phosphate. The protein is Pyridoxine 5'-phosphate synthase of Flavobacterium johnsoniae (strain ATCC 17061 / DSM 2064 / JCM 8514 / BCRC 14874 / CCUG 350202 / NBRC 14942 / NCIMB 11054 / UW101) (Cytophaga johnsonae).